The chain runs to 264 residues: General transcription factor IIF subunit 2 (264 aa).

Belongs to the TFIIF beta subunit family. In terms of assembly, heterodimer of an alpha and a beta subunit.

The protein localises to the nucleus. In terms of biological role, TFIIF is a general transcription initiation factor that binds to RNA polymerase II and helps to recruit it to the initiation complex in collaboration with TFIIB. The polypeptide is General transcription factor IIF subunit 2 (gtf2f2) (Xenopus laevis (African clawed frog)).